The primary structure comprises 316 residues: 4-hydroxy-3-methylbut-2-enyl diphosphate reductase (316 aa).

Cysteine 12 provides a ligand contact to [4Fe-4S] cluster. (2E)-4-hydroxy-3-methylbut-2-enyl diphosphate contacts are provided by histidine 43 and histidine 81. Residues histidine 43 and histidine 81 each coordinate dimethylallyl diphosphate. Histidine 43 and histidine 81 together coordinate isopentenyl diphosphate. Cysteine 103 contributes to the [4Fe-4S] cluster binding site. Position 131 (histidine 131) interacts with (2E)-4-hydroxy-3-methylbut-2-enyl diphosphate. Position 131 (histidine 131) interacts with dimethylallyl diphosphate. Histidine 131 provides a ligand contact to isopentenyl diphosphate. Catalysis depends on glutamate 133, which acts as the Proton donor. Threonine 170 contributes to the (2E)-4-hydroxy-3-methylbut-2-enyl diphosphate binding site. Cysteine 198 provides a ligand contact to [4Fe-4S] cluster. The (2E)-4-hydroxy-3-methylbut-2-enyl diphosphate site is built by serine 226, asparagine 228, and serine 271. Dimethylallyl diphosphate contacts are provided by serine 226, asparagine 228, and serine 271. Residues serine 226, asparagine 228, and serine 271 each coordinate isopentenyl diphosphate.

It belongs to the IspH family. [4Fe-4S] cluster serves as cofactor.

It catalyses the reaction isopentenyl diphosphate + 2 oxidized [2Fe-2S]-[ferredoxin] + H2O = (2E)-4-hydroxy-3-methylbut-2-enyl diphosphate + 2 reduced [2Fe-2S]-[ferredoxin] + 2 H(+). It carries out the reaction dimethylallyl diphosphate + 2 oxidized [2Fe-2S]-[ferredoxin] + H2O = (2E)-4-hydroxy-3-methylbut-2-enyl diphosphate + 2 reduced [2Fe-2S]-[ferredoxin] + 2 H(+). It participates in isoprenoid biosynthesis; dimethylallyl diphosphate biosynthesis; dimethylallyl diphosphate from (2E)-4-hydroxy-3-methylbutenyl diphosphate: step 1/1. The protein operates within isoprenoid biosynthesis; isopentenyl diphosphate biosynthesis via DXP pathway; isopentenyl diphosphate from 1-deoxy-D-xylulose 5-phosphate: step 6/6. Functionally, catalyzes the conversion of 1-hydroxy-2-methyl-2-(E)-butenyl 4-diphosphate (HMBPP) into a mixture of isopentenyl diphosphate (IPP) and dimethylallyl diphosphate (DMAPP). Acts in the terminal step of the DOXP/MEP pathway for isoprenoid precursor biosynthesis. This is 4-hydroxy-3-methylbut-2-enyl diphosphate reductase from Bacillus cereus (strain B4264).